The following is an 871-amino-acid chain: Isoleucine--tRNA ligase (871 aa).

The 'HIGH' region motif lies at 57-67 (PYANGNLHMGH). An L-isoleucyl-5'-AMP-binding site is contributed by E554. A 'KMSKS' region motif is present at residues 595-599 (KMSKS). An ATP-binding site is contributed by K598.

This sequence belongs to the class-I aminoacyl-tRNA synthetase family. IleS type 1 subfamily. In terms of assembly, monomer.

It is found in the cytoplasm. It carries out the reaction tRNA(Ile) + L-isoleucine + ATP = L-isoleucyl-tRNA(Ile) + AMP + diphosphate. Functionally, catalyzes the attachment of isoleucine to tRNA(Ile). As IleRS can inadvertently accommodate and process structurally similar amino acids such as valine, to avoid such errors it has two additional distinct tRNA(Ile)-dependent editing activities. One activity is designated as 'pretransfer' editing and involves the hydrolysis of activated Val-AMP. The other activity is designated 'posttransfer' editing and involves deacylation of mischarged Val-tRNA(Ile). In Staphylococcus epidermidis, this protein is Isoleucine--tRNA ligase.